Here is an 81-residue protein sequence, read N- to C-terminus: MFLLVFLCCLHLVISSHTPDESFLCYQPDQVCCFICRGAAPLPSEGECNPHPTAPWCREGAVEWVPYSTGQCRTTCIPYVE.

A signal peptide spans 1 to 15; the sequence is MFLLVFLCCLHLVIS. 4 disulfide bridges follow: C25–C48, C32–C76, C33–C57, and C36–C72.

In terms of biological role, tightly binding, competitive inhibitor of different types of pancreatic-like carboxypeptidases. Inhibits human CPA4. This Hirudo medicinalis (Medicinal leech) protein is Metallocarboxypeptidase inhibitor.